The primary structure comprises 194 residues: tRNA (guanosine(18)-2'-O)-methyltransferase (194 aa).

Residues threonine 99, 122 to 126, isoleucine 142, and leucine 151 each bind S-adenosyl-L-methionine; that span reads GAEKW.

This sequence belongs to the class IV-like SAM-binding methyltransferase superfamily. RNA methyltransferase TrmH family. In terms of assembly, monomer.

It carries out the reaction guanosine(18) in tRNA + S-adenosyl-L-methionine = 2'-O-methylguanosine(18) in tRNA + S-adenosyl-L-homocysteine + H(+). With respect to regulation, stimulated by magnesium ions and spermine. Inhibited by S-adenosyl-homocysteine. In terms of biological role, catalyzes the 2'-O methylation of guanosine at position 18 in tRNA. The protein is tRNA (guanosine(18)-2'-O)-methyltransferase of Thermus thermophilus (strain ATCC BAA-163 / DSM 7039 / HB27).